The following is a 300-amino-acid chain: Acetylglutamate kinase (300 aa).

Residues 73-74 (GG), Arg95, and Asn197 each bind substrate.

The protein belongs to the acetylglutamate kinase family. ArgB subfamily.

The protein localises to the cytoplasm. It carries out the reaction N-acetyl-L-glutamate + ATP = N-acetyl-L-glutamyl 5-phosphate + ADP. Its pathway is amino-acid biosynthesis; L-arginine biosynthesis; N(2)-acetyl-L-ornithine from L-glutamate: step 2/4. Catalyzes the ATP-dependent phosphorylation of N-acetyl-L-glutamate. The chain is Acetylglutamate kinase from Bordetella bronchiseptica (strain ATCC BAA-588 / NCTC 13252 / RB50) (Alcaligenes bronchisepticus).